Reading from the N-terminus, the 515-residue chain is Maturase K (515 aa).

It belongs to the intron maturase 2 family. MatK subfamily.

It is found in the plastid. Its subcellular location is the chloroplast. Usually encoded in the trnK tRNA gene intron. Probably assists in splicing its own and other chloroplast group II introns. The protein is Maturase K of Picea mariana (Black spruce).